The sequence spans 149 residues: Hut operon positive regulatory protein (149 aa).

The protein belongs to the HutP family. As to quaternary structure, homohexamer.

Antiterminator that binds to cis-acting regulatory sequences on the mRNA in the presence of histidine, thereby suppressing transcription termination and activating the hut operon for histidine utilization. This Geobacillus sp. (strain WCH70) protein is Hut operon positive regulatory protein.